We begin with the raw amino-acid sequence, 245 residues long: 1-(5-phosphoribosyl)-5-[(5-phosphoribosylamino)methylideneamino] imidazole-4-carboxamide isomerase (245 aa).

The active-site Proton acceptor is the aspartate 7. Catalysis depends on aspartate 129, which acts as the Proton donor.

This sequence belongs to the HisA/HisF family.

Its subcellular location is the cytoplasm. It carries out the reaction 1-(5-phospho-beta-D-ribosyl)-5-[(5-phospho-beta-D-ribosylamino)methylideneamino]imidazole-4-carboxamide = 5-[(5-phospho-1-deoxy-D-ribulos-1-ylimino)methylamino]-1-(5-phospho-beta-D-ribosyl)imidazole-4-carboxamide. It participates in amino-acid biosynthesis; L-histidine biosynthesis; L-histidine from 5-phospho-alpha-D-ribose 1-diphosphate: step 4/9. The protein is 1-(5-phosphoribosyl)-5-[(5-phosphoribosylamino)methylideneamino] imidazole-4-carboxamide isomerase of Shewanella loihica (strain ATCC BAA-1088 / PV-4).